The primary structure comprises 380 residues: MSDSPIKYRLIKKEKHTGARLGEIITPHGTFPTPMFMPVGTQATVKTQSPEELKEMGSGIILSNTYHLWLRPGDELIARAGGLHKFMNWDQPILTDSGGFQVYSLADSRNITEEGVTFKNHLNGSKMFLSPEKAISIQNNLGSDIMMSFDECPQFYQPYDYVKKSIERTSRWAERGLKAHRRPHDQGLFGIVQGAGFEDLRRQSAHDLVSMDFPGYSIGGLAVGETHEEMNAVLDFTTQLLPENKPRYLMGVGAPDSLIDGVIRGVDMFDCVLPTRIARNGTCMTSQGRLVVKNAQFAEDFTPLDPECDCYTCKNYTRAYLRHLLKADETFGIRLTSYHNLYFLLNLMKQVRQAIMDDNLLEFREYFVEKYGYNKSGRNF.

Aspartate 96 (proton acceptor) is an active-site residue. Substrate is bound by residues 96 to 100 (DSGGF), aspartate 150, glutamine 193, and glycine 220. Residues 251 to 257 (GVGAPDS) form an RNA binding region. Aspartate 270 serves as the catalytic Nucleophile. The RNA binding; important for wobble base 34 recognition stretch occupies residues 275 to 279 (TRIAR). 4 residues coordinate Zn(2+): cysteine 308, cysteine 310, cysteine 313, and histidine 339.

This sequence belongs to the queuine tRNA-ribosyltransferase family. Homodimer. Within each dimer, one monomer is responsible for RNA recognition and catalysis, while the other monomer binds to the replacement base PreQ1. The cofactor is Zn(2+).

The enzyme catalyses 7-aminomethyl-7-carbaguanine + guanosine(34) in tRNA = 7-aminomethyl-7-carbaguanosine(34) in tRNA + guanine. It participates in tRNA modification; tRNA-queuosine biosynthesis. Functionally, catalyzes the base-exchange of a guanine (G) residue with the queuine precursor 7-aminomethyl-7-deazaguanine (PreQ1) at position 34 (anticodon wobble position) in tRNAs with GU(N) anticodons (tRNA-Asp, -Asn, -His and -Tyr). Catalysis occurs through a double-displacement mechanism. The nucleophile active site attacks the C1' of nucleotide 34 to detach the guanine base from the RNA, forming a covalent enzyme-RNA intermediate. The proton acceptor active site deprotonates the incoming PreQ1, allowing a nucleophilic attack on the C1' of the ribose to form the product. After dissociation, two additional enzymatic reactions on the tRNA convert PreQ1 to queuine (Q), resulting in the hypermodified nucleoside queuosine (7-(((4,5-cis-dihydroxy-2-cyclopenten-1-yl)amino)methyl)-7-deazaguanosine). This chain is Queuine tRNA-ribosyltransferase, found in Streptococcus pneumoniae (strain Hungary19A-6).